The chain runs to 201 residues: Small ribosomal subunit protein uS4 (201 aa).

Residues 1–46 (MARYTGPRSRISRRFGEPVMGDSKALQKKNYAPGMHGRNKKRKQSE) form a disordered region. Positions 92 to 151 (ARLDNTVYRLGIASSRRAARQLVIHKHIVVNGDVVNIPSYQLKPGDQLGVREKSKSIEAI) constitute an S4 RNA-binding domain.

Belongs to the universal ribosomal protein uS4 family. As to quaternary structure, part of the 30S ribosomal subunit. Contacts protein S5. The interaction surface between S4 and S5 is involved in control of translational fidelity.

In terms of biological role, one of the primary rRNA binding proteins, it binds directly to 16S rRNA where it nucleates assembly of the body of the 30S subunit. With S5 and S12 plays an important role in translational accuracy. In Cytophaga hutchinsonii (strain ATCC 33406 / DSM 1761 / CIP 103989 / NBRC 15051 / NCIMB 9469 / D465), this protein is Small ribosomal subunit protein uS4.